We begin with the raw amino-acid sequence, 525 residues long: Zwittermicin A synthase ZmaJ (525 aa).

This sequence belongs to the ATP-dependent AMP-binding enzyme family.

It carries out the reaction holo-[peptidyl-carrier protein] + L-serine + ATP = L-seryl-[peptidyl-carrier protein] + AMP + diphosphate. The protein operates within antibiotic biosynthesis. In terms of biological role, involved in the biosynthesis of the linear aminopolyol antibiotic zwittermicin A (ZmA). Specifically adenylates L-serine and loads it onto the holo form of ZmaH via a thioester linkage to the phosphopanthetheine moiety. In Bacillus cereus, this protein is Zwittermicin A synthase ZmaJ.